The primary structure comprises 355 residues: UDP-N-acetylglucosamine--N-acetylmuramyl-(pentapeptide) pyrophosphoryl-undecaprenol N-acetylglucosamine transferase (355 aa).

UDP-N-acetyl-alpha-D-glucosamine is bound by residues 11–13, N123, R162, S185, I239, 258–263, and Q284; these read TGG and ALTVSE.

The protein belongs to the glycosyltransferase 28 family. MurG subfamily.

It localises to the cell inner membrane. It carries out the reaction di-trans,octa-cis-undecaprenyl diphospho-N-acetyl-alpha-D-muramoyl-L-alanyl-D-glutamyl-meso-2,6-diaminopimeloyl-D-alanyl-D-alanine + UDP-N-acetyl-alpha-D-glucosamine = di-trans,octa-cis-undecaprenyl diphospho-[N-acetyl-alpha-D-glucosaminyl-(1-&gt;4)]-N-acetyl-alpha-D-muramoyl-L-alanyl-D-glutamyl-meso-2,6-diaminopimeloyl-D-alanyl-D-alanine + UDP + H(+). The protein operates within cell wall biogenesis; peptidoglycan biosynthesis. In terms of biological role, cell wall formation. Catalyzes the transfer of a GlcNAc subunit on undecaprenyl-pyrophosphoryl-MurNAc-pentapeptide (lipid intermediate I) to form undecaprenyl-pyrophosphoryl-MurNAc-(pentapeptide)GlcNAc (lipid intermediate II). This Hydrogenovibrio crunogenus (strain DSM 25203 / XCL-2) (Thiomicrospira crunogena) protein is UDP-N-acetylglucosamine--N-acetylmuramyl-(pentapeptide) pyrophosphoryl-undecaprenol N-acetylglucosamine transferase.